The chain runs to 436 residues: Enolase (436 aa).

Gln-167 serves as a coordination point for (2R)-2-phosphoglycerate. Glu-209 (proton donor) is an active-site residue. Mg(2+) is bound by residues Asp-246, Glu-291, and Asp-318. Lys-343, Arg-372, Ser-373, and Lys-394 together coordinate (2R)-2-phosphoglycerate. Lys-343 functions as the Proton acceptor in the catalytic mechanism.

Belongs to the enolase family. Component of the RNA degradosome, a multiprotein complex involved in RNA processing and mRNA degradation. The cofactor is Mg(2+).

The protein localises to the cytoplasm. The protein resides in the secreted. It localises to the cell surface. The enzyme catalyses (2R)-2-phosphoglycerate = phosphoenolpyruvate + H2O. It functions in the pathway carbohydrate degradation; glycolysis; pyruvate from D-glyceraldehyde 3-phosphate: step 4/5. Its function is as follows. Catalyzes the reversible conversion of 2-phosphoglycerate (2-PG) into phosphoenolpyruvate (PEP). It is essential for the degradation of carbohydrates via glycolysis. The polypeptide is Enolase (Actinobacillus pleuropneumoniae serotype 5b (strain L20)).